Consider the following 437-residue polypeptide: MKFYIKTFGCQMNVNDSEKMAGILQTLGYTPTENWEEADVILVNTCSVREKPDQKVLSALGEFKKVKKHNPNAVIGVCGCLAQRAGYEIYQKAPFIDIVFGTTNIHHLPNLLEEAKSGNKAIEILEEIDENENLLDQFPTVRENKYTAFVTVIRGCDKKCTYCIVPTTRGRERSRRIGDILREVQYLVEDGVKEIHLIGQNVTAYGKDFGDVKFWELLKAVAEVDGVERIRFTTGHPRDLDEDTIKVMADLPQICEALHLPIQAGSDRILQAMDRGYTQKEYLQKIELLKKYIPNIALSTDIIVGFPGETYEDYLETVKVIKEVEYDQVFAFKYSPRPGTPAADLPMTESPEELSKRLNDLINLQKDITFKKNLEYQDKIVEILVEEINQENKLVGRTRTNKLVYAEGSPEYLGKLVNVKIEKVNRFSLEGSIIGGD.

Residues 1-117 form the MTTase N-terminal domain; that stretch reads MKFYIKTFGC…LPNLLEEAKS (117 aa). [4Fe-4S] cluster contacts are provided by Cys10, Cys46, Cys80, Cys156, Cys160, and Cys163. The Radical SAM core domain occupies 142 to 371; it reads RENKYTAFVT…INLQKDITFK (230 aa). Residues 374 to 435 enclose the TRAM domain; sequence LEYQDKIVEI…RFSLEGSIIG (62 aa).

Belongs to the methylthiotransferase family. MiaB subfamily. In terms of assembly, monomer. It depends on [4Fe-4S] cluster as a cofactor.

The protein localises to the cytoplasm. The catalysed reaction is N(6)-dimethylallyladenosine(37) in tRNA + (sulfur carrier)-SH + AH2 + 2 S-adenosyl-L-methionine = 2-methylsulfanyl-N(6)-dimethylallyladenosine(37) in tRNA + (sulfur carrier)-H + 5'-deoxyadenosine + L-methionine + A + S-adenosyl-L-homocysteine + 2 H(+). Catalyzes the methylthiolation of N6-(dimethylallyl)adenosine (i(6)A), leading to the formation of 2-methylthio-N6-(dimethylallyl)adenosine (ms(2)i(6)A) at position 37 in tRNAs that read codons beginning with uridine. This Sulfurihydrogenibium sp. (strain YO3AOP1) protein is tRNA-2-methylthio-N(6)-dimethylallyladenosine synthase.